A 329-amino-acid polypeptide reads, in one-letter code: Acetyl-coenzyme A carboxylase carboxyl transferase subunit alpha (329 aa).

Residues glutamine 40–glutamate 294 form the CoA carboxyltransferase C-terminal domain.

Belongs to the AccA family. In terms of assembly, acetyl-CoA carboxylase is a heterohexamer composed of biotin carboxyl carrier protein (AccB), biotin carboxylase (AccC) and two subunits each of ACCase subunit alpha (AccA) and ACCase subunit beta (AccD).

The protein localises to the cytoplasm. The enzyme catalyses N(6)-carboxybiotinyl-L-lysyl-[protein] + acetyl-CoA = N(6)-biotinyl-L-lysyl-[protein] + malonyl-CoA. It functions in the pathway lipid metabolism; malonyl-CoA biosynthesis; malonyl-CoA from acetyl-CoA: step 1/1. In terms of biological role, component of the acetyl coenzyme A carboxylase (ACC) complex. First, biotin carboxylase catalyzes the carboxylation of biotin on its carrier protein (BCCP) and then the CO(2) group is transferred by the carboxyltransferase to acetyl-CoA to form malonyl-CoA. This chain is Acetyl-coenzyme A carboxylase carboxyl transferase subunit alpha, found in Prochlorococcus marinus (strain NATL1A).